Consider the following 271-residue polypeptide: Phosphatidylglycerol--prolipoprotein diacylglyceryl transferase (271 aa).

4 consecutive transmembrane segments (helical) span residues 18-38, 51-71, 89-109, and 115-135; these read LSVH…LWMA, IFID…RAYY, IWKG…TGIV, and GISF…GQAI. Arg-137 contacts a 1,2-diacyl-sn-glycero-3-phospho-(1'-sn-glycerol). 3 helical membrane-spanning segments follow: residues 177-197, 205-225, and 236-256; these read HPTF…LLLL, GNLF…IEGM, and LRIA…LMIF.

This sequence belongs to the Lgt family.

Its subcellular location is the cell membrane. It catalyses the reaction L-cysteinyl-[prolipoprotein] + a 1,2-diacyl-sn-glycero-3-phospho-(1'-sn-glycerol) = an S-1,2-diacyl-sn-glyceryl-L-cysteinyl-[prolipoprotein] + sn-glycerol 1-phosphate + H(+). It participates in protein modification; lipoprotein biosynthesis (diacylglyceryl transfer). Catalyzes the transfer of the diacylglyceryl group from phosphatidylglycerol to the sulfhydryl group of the N-terminal cysteine of a prolipoprotein, the first step in the formation of mature lipoproteins. In Bacillus velezensis (strain DSM 23117 / BGSC 10A6 / LMG 26770 / FZB42) (Bacillus amyloliquefaciens subsp. plantarum), this protein is Phosphatidylglycerol--prolipoprotein diacylglyceryl transferase.